The chain runs to 236 residues: Small ribosomal subunit protein uS2c (236 aa).

The protein belongs to the universal ribosomal protein uS2 family.

It is found in the plastid. Its subcellular location is the chloroplast. The chain is Small ribosomal subunit protein uS2c (rps2) from Citrus sinensis (Sweet orange).